The sequence spans 267 residues: O-methyltransferase (267 aa).

2 residues coordinate S-adenosyl-L-methionine: glutamine 100 and histidine 145.

It belongs to the methyltransferase superfamily.

Its pathway is antifungal biosynthesis. In terms of biological role, O-methyltransferase; part of the gene cluster that mediates the biosynthesis of the tetrahydropyranyl antifungal agent lanomycin that acts as an inhibitor of CYP51 and blocks the ergosterol biosynthesis. The biosynthesis probably begins with the formation of an hexaketide, followed by methionine mediated alkylation of C-2 and C-6, and methylation of the reduced C-3 oxygen, pyran forming reductive ring closure, oxygenation of C-4, beta-keto reduction, enoyl reduction and dehydration of the remaining oxygens, and finally, acylation with glycine to complete the biosynthesis. This is O-methyltransferase from Pyrenophora dematioidea (Helminthosporium dematioideum).